The following is a 216-amino-acid chain: Large ribosomal subunit protein uL3 (216 aa).

The disordered stretch occupies residues 134–153 (RATHGNSRSHNVPGSIGMAQ). Gln-153 bears the N5-methylglutamine mark.

The protein belongs to the universal ribosomal protein uL3 family. As to quaternary structure, part of the 50S ribosomal subunit. Forms a cluster with proteins L14 and L19. Methylated by PrmB.

In terms of biological role, one of the primary rRNA binding proteins, it binds directly near the 3'-end of the 23S rRNA, where it nucleates assembly of the 50S subunit. This Cupriavidus taiwanensis (strain DSM 17343 / BCRC 17206 / CCUG 44338 / CIP 107171 / LMG 19424 / R1) (Ralstonia taiwanensis (strain LMG 19424)) protein is Large ribosomal subunit protein uL3.